A 441-amino-acid chain; its full sequence is Ribulose bisphosphate carboxylase large chain (441 aa).

Substrate contacts are provided by Asn-89 and Thr-139. Lys-141 serves as the catalytic Proton acceptor. Substrate is bound at residue Lys-143. Mg(2+)-binding residues include Lys-167, Asp-169, and Glu-170. Position 167 is an N6-carboxylysine (Lys-167). Catalysis depends on His-260, which acts as the Proton acceptor. Arg-261, His-293, and Ser-345 together coordinate substrate.

This sequence belongs to the RuBisCO large chain family. Type I subfamily. In terms of assembly, heterohexadecamer of 8 large chains and 8 small chains; disulfide-linked. The disulfide link is formed within the large subunit homodimers. Requires Mg(2+) as cofactor. In terms of processing, the disulfide bond which can form in the large chain dimeric partners within the hexadecamer appears to be associated with oxidative stress and protein turnover.

The protein localises to the plastid. It localises to the chloroplast. The catalysed reaction is 2 (2R)-3-phosphoglycerate + 2 H(+) = D-ribulose 1,5-bisphosphate + CO2 + H2O. It catalyses the reaction D-ribulose 1,5-bisphosphate + O2 = 2-phosphoglycolate + (2R)-3-phosphoglycerate + 2 H(+). RuBisCO catalyzes two reactions: the carboxylation of D-ribulose 1,5-bisphosphate, the primary event in carbon dioxide fixation, as well as the oxidative fragmentation of the pentose substrate in the photorespiration process. Both reactions occur simultaneously and in competition at the same active site. This Polemonium reptans (Greek valerian) protein is Ribulose bisphosphate carboxylase large chain.